The sequence spans 352 residues: Probable RNA methyltransferase Mpe_A3613 (352 aa).

Glutamate 88 acts as the Proton acceptor in catalysis. In terms of domain architecture, Radical SAM core spans leucine 91–aspartate 317. An intrachain disulfide couples cysteine 98 to cysteine 322. Residues cysteine 105, cysteine 109, and cysteine 112 each contribute to the [4Fe-4S] cluster site. S-adenosyl-L-methionine is bound by residues glycine 150–glutamate 151, serine 180, serine 203–histidine 205, and asparagine 279. Residue cysteine 322 is the S-methylcysteine intermediate of the active site.

Belongs to the radical SAM superfamily. RlmN family. [4Fe-4S] cluster serves as cofactor.

It is found in the cytoplasm. The chain is Probable RNA methyltransferase Mpe_A3613 from Methylibium petroleiphilum (strain ATCC BAA-1232 / LMG 22953 / PM1).